The sequence spans 584 residues: 2-succinyl-5-enolpyruvyl-6-hydroxy-3-cyclohexene-1-carboxylate synthase (584 aa).

The protein belongs to the TPP enzyme family. MenD subfamily. As to quaternary structure, homodimer. Mg(2+) is required as a cofactor. Requires Mn(2+) as cofactor. Thiamine diphosphate serves as cofactor.

The catalysed reaction is isochorismate + 2-oxoglutarate + H(+) = 5-enolpyruvoyl-6-hydroxy-2-succinyl-cyclohex-3-ene-1-carboxylate + CO2. It functions in the pathway quinol/quinone metabolism; 1,4-dihydroxy-2-naphthoate biosynthesis; 1,4-dihydroxy-2-naphthoate from chorismate: step 2/7. Its pathway is quinol/quinone metabolism; menaquinone biosynthesis. Its function is as follows. Catalyzes the thiamine diphosphate-dependent decarboxylation of 2-oxoglutarate and the subsequent addition of the resulting succinic semialdehyde-thiamine pyrophosphate anion to isochorismate to yield 2-succinyl-5-enolpyruvyl-6-hydroxy-3-cyclohexene-1-carboxylate (SEPHCHC). The chain is 2-succinyl-5-enolpyruvyl-6-hydroxy-3-cyclohexene-1-carboxylate synthase from Bacillus thuringiensis (strain Al Hakam).